We begin with the raw amino-acid sequence, 314 residues long: Probable manganese-dependent inorganic pyrophosphatase (314 aa).

6 residues coordinate Mn(2+): His-10, Asp-14, Asp-16, Asp-80, His-102, and Asp-154.

It belongs to the PPase class C family. Mn(2+) is required as a cofactor.

It localises to the cytoplasm. It carries out the reaction diphosphate + H2O = 2 phosphate + H(+). This is Probable manganese-dependent inorganic pyrophosphatase (ppaC) from Lactococcus lactis subsp. lactis (strain IL1403) (Streptococcus lactis).